Here is a 401-residue protein sequence, read N- to C-terminus: Probable trafficking protein particle complex subunit 13 homolog (401 aa).

It belongs to the TRAPPC13 family.

The polypeptide is Probable trafficking protein particle complex subunit 13 homolog (Caenorhabditis briggsae).